The primary structure comprises 122 residues: Large ribosomal subunit protein uL14 (122 aa).

Belongs to the universal ribosomal protein uL14 family. Part of the 50S ribosomal subunit. Forms a cluster with proteins L3 and L19. In the 70S ribosome, L14 and L19 interact and together make contacts with the 16S rRNA in bridges B5 and B8.

Its function is as follows. Binds to 23S rRNA. Forms part of two intersubunit bridges in the 70S ribosome. The chain is Large ribosomal subunit protein uL14 from Spiroplasma citri.